Here is a 606-residue protein sequence, read N- to C-terminus: NADH-ubiquinone oxidoreductase chain 5 (606 aa).

15 consecutive transmembrane segments (helical) span residues 4–24 (FSSL…MMSL), 43–63 (AFIT…ELII), 87–107 (MMFT…SMWY), 117–137 (FFKY…ANNL), 140–160 (LFIG…WWYG), 171–191 (AVLY…WFLT), 213–233 (LIGL…HPWL), 241–261 (TPVS…FLLI), 272–292 (FIQS…AMCA), 310–330 (LGLM…LHIC), 366–386 (MPFT…MPFL), 413–433 (LIAT…ALLG), 457–477 (LLIG…PTTI), 482–502 (MPYY…ILAL), and 582–602 (GLIK…MMLF).

As to quaternary structure, core subunit of respiratory chain NADH dehydrogenase (Complex I) which is composed of 45 different subunits.

It localises to the mitochondrion inner membrane. It carries out the reaction a ubiquinone + NADH + 5 H(+)(in) = a ubiquinol + NAD(+) + 4 H(+)(out). In terms of biological role, core subunit of the mitochondrial membrane respiratory chain NADH dehydrogenase (Complex I) which catalyzes electron transfer from NADH through the respiratory chain, using ubiquinone as an electron acceptor. Essential for the catalytic activity and assembly of complex I. This chain is NADH-ubiquinone oxidoreductase chain 5 (MT-ND5), found in Bos indicus (Zebu).